A 59-amino-acid polypeptide reads, in one-letter code: Photosystem II reaction center protein K (59 aa).

Residues M1–A22 constitute a propeptide that is removed on maturation. The helical transmembrane segment at M38–F58 threads the bilayer.

Belongs to the PsbK family. PSII is composed of 1 copy each of membrane proteins PsbA, PsbB, PsbC, PsbD, PsbE, PsbF, PsbH, PsbI, PsbJ, PsbK, PsbL, PsbM, PsbT, PsbX, PsbY, PsbZ, Psb30/Ycf12, at least 3 peripheral proteins of the oxygen-evolving complex and a large number of cofactors. It forms dimeric complexes.

It localises to the plastid. It is found in the chloroplast thylakoid membrane. One of the components of the core complex of photosystem II (PSII). PSII is a light-driven water:plastoquinone oxidoreductase that uses light energy to abstract electrons from H(2)O, generating O(2) and a proton gradient subsequently used for ATP formation. It consists of a core antenna complex that captures photons, and an electron transfer chain that converts photonic excitation into a charge separation. This is Photosystem II reaction center protein K from Lactuca sativa (Garden lettuce).